A 239-amino-acid polypeptide reads, in one-letter code: Diablo IAP-binding mitochondrial protein (239 aa).

A mitochondrion-targeting transit peptide spans 1 to 22; sequence MAVLKSWLSRSVTLLFRYRQCL. The IAP-binding motif lies at 56-60; sequence AVPIA. Residues 217–239 form a disordered region; the sequence is RQKTQEEGEERAESEQEAYLRED.

Belongs to the Smac/DIABLO protein family. Homodimer. Interacts with BEX3. Interacts with BIRC2/c-IAP1 (via BIR3 domain). Interacts with BIRC6/BRUCE. Interacts with BIRC7/livin. Interacts with XIAP/BIRC4 (via BIR3 domain). Interacts with the monomeric and dimeric form of BIRC5/survivin. Interacts with AREL1 (via HECT domain); in the cytoplasm following induction of apoptosis. In terms of processing, ubiquitinated by BIRC7/livin. Ubiquitinated by BIRC6. Post-translationally, the precursor form is proteolytically cleaved by mitochondrial processing peptidase MPP to remove the transit peptide and produce an intermediate form. This is then processed by PARL to produce the mature cleaved form which is released from mitochondria into the cytosol in apoptotic cells.

It localises to the mitochondrion. The protein resides in the cytoplasm. Its subcellular location is the cytosol. In terms of biological role, promotes apoptosis by activating caspases in the cytochrome c/Apaf-1/caspase-9 pathway. Acts by opposing the inhibitory activity of inhibitor of apoptosis proteins (IAP). Inhibits the activity of BIRC6/BRUCE by inhibiting its binding to caspases. The chain is Diablo IAP-binding mitochondrial protein from Pongo abelii (Sumatran orangutan).